A 162-amino-acid chain; its full sequence is NADH-quinone oxidoreductase subunit I 2 (162 aa).

4Fe-4S ferredoxin-type domains are found at residues 52 to 82 and 93 to 122; these read LRRYPNGEERCIACKLCEAVCPAQAITIEAG and ERYDIDMVKCIYCGLCQEACPVDAIVEGPN. Residues C62, C65, C68, C72, C102, C105, C108, and C112 each contribute to the [4Fe-4S] cluster site.

This sequence belongs to the complex I 23 kDa subunit family. NDH-1 is composed of 14 different subunits. Subunits NuoA, H, J, K, L, M, N constitute the membrane sector of the complex. The cofactor is [4Fe-4S] cluster.

It is found in the cell inner membrane. The catalysed reaction is a quinone + NADH + 5 H(+)(in) = a quinol + NAD(+) + 4 H(+)(out). Its function is as follows. NDH-1 shuttles electrons from NADH, via FMN and iron-sulfur (Fe-S) centers, to quinones in the respiratory chain. The immediate electron acceptor for the enzyme in this species is believed to be ubiquinone. Couples the redox reaction to proton translocation (for every two electrons transferred, four hydrogen ions are translocated across the cytoplasmic membrane), and thus conserves the redox energy in a proton gradient. In Rhodopseudomonas palustris (strain BisA53), this protein is NADH-quinone oxidoreductase subunit I 2.